The following is a 461-amino-acid chain: Complement C1r subcomponent-like protein (461 aa).

The first 22 residues, 1–22 (MCWLLLWGILHTCPTQASVLLA), serve as a signal peptide directing secretion. The region spanning 23-139 (QQFPQQLTSP…KGFLALYQAA (117 aa)) is the CUB domain. Intrachain disulfides connect Cys-71–Cys-89 and Cys-164–Cys-197. One can recognise a Sushi domain in the interval 138-199 (AAVSQPNGDA…RGEEVPECVP (62 aa)). A Peptidase S1 domain is found at 214–453 (TFGSSRAKPG…YVDWIKGVIE (240 aa)). The active-site Charge relay system is His-252. Asn-265 carries N-linked (GlcNAc...) asparagine glycosylation. The active-site Charge relay system is the Asp-308. N-linked (GlcNAc...) asparagine glycosylation is present at Asn-332. Intrachain disulfides connect Cys-371–Cys-390 and Cys-401–Cys-431. Ser-405 functions as the Charge relay system in the catalytic mechanism.

This sequence belongs to the peptidase S1 family.

It is found in the secreted. Its function is as follows. Mediates the proteolytic cleavage of HP/haptoglobin in the endoplasmic reticulum. The protein is Complement C1r subcomponent-like protein (C1rl) of Rattus norvegicus (Rat).